Reading from the N-terminus, the 367-residue chain is Peptide chain release factor 2 (367 aa).

Gln250 carries the N5-methylglutamine modification.

It belongs to the prokaryotic/mitochondrial release factor family. Post-translationally, methylated by PrmC. Methylation increases the termination efficiency of RF2.

The protein resides in the cytoplasm. Peptide chain release factor 2 directs the termination of translation in response to the peptide chain termination codons UGA and UAA. This chain is Peptide chain release factor 2, found in Chloroflexus aggregans (strain MD-66 / DSM 9485).